We begin with the raw amino-acid sequence, 824 residues long: Vesicle-fusing ATPase (824 aa).

ATP-binding positions include arginine 582 to tryptophan 587 and alanine 622 to leucine 629. Threonine 627 lines the Mg(2+) pocket.

It belongs to the AAA ATPase family. In terms of assembly, homohexamer. Mg(2+) serves as cofactor.

Its subcellular location is the cytoplasm. The enzyme catalyses ATP + H2O = ADP + phosphate + H(+). Required for vesicle-mediated transport. Catalyzes the fusion of transport vesicles within the Golgi cisternae. Is also required for transport from the endoplasmic reticulum to the Golgi stack. Seems to function as a fusion protein required for the delivery of cargo proteins to all compartments of the Golgi stack independent of vesicle origin. The sequence is that of Vesicle-fusing ATPase (nsf-1) from Caenorhabditis elegans.